A 125-amino-acid polypeptide reads, in one-letter code: Small ribosomal subunit protein uS13 (125 aa).

The segment at 97-125 (PLRGQRTKTNARTRKGKRKTVANKKMASK) is disordered.

This sequence belongs to the universal ribosomal protein uS13 family. Part of the 30S ribosomal subunit. Forms a loose heterodimer with protein S19. Forms two bridges to the 50S subunit in the 70S ribosome.

Located at the top of the head of the 30S subunit, it contacts several helices of the 16S rRNA. In the 70S ribosome it contacts the 23S rRNA (bridge B1a) and protein L5 of the 50S subunit (bridge B1b), connecting the 2 subunits; these bridges are implicated in subunit movement. Contacts the tRNAs in the A and P-sites. This is Small ribosomal subunit protein uS13 from Borrelia hermsii (strain HS1 / DAH).